The primary structure comprises 86 residues: V-type proton ATPase subunit e (86 aa).

The helical transmembrane segment at 1–21 (MGILIPLVSVSAFWAIIGFGG) threads the bilayer. The Cytoplasmic segment spans residues 22 to 32 (PWIVPKGPNRG). Residues 33-53 (IIQLMIIMTAVCCWMFWIMVF) form a helical membrane-spanning segment. The Lumenal segment spans residues 54 to 86 (LHQLNPLIGPQINVKTIRWISEKWGDAPNVINN).

It belongs to the V-ATPase e1/e2 subunit family. In terms of assembly, V-ATPase is a heteromultimeric enzyme made up of two complexes: the ATP-hydrolytic V1 complex and the proton translocation V0 complex. The V1 complex consists of three catalytic AB heterodimers that form a heterohexamer, three peripheral stalks each consisting of EG heterodimers, one central rotor including subunits D and F, and the regulatory subunits C and H. The proton translocation complex V0 consists of the proton transport subunit a, a ring of proteolipid subunits c9c'', rotary subunit d, subunits e and f, and the accessory subunits vah-19/Ac45 and vah-20/PRR.

It localises to the apical cell membrane. In terms of biological role, subunit of the V0 complex of vacuolar(H+)-ATPase (V-ATPase), a multisubunit enzyme composed of a peripheral complex (V1) that hydrolyzes ATP and a membrane integral complex (V0) that translocates protons. V-ATPase is responsible for acidifying and maintaining the pH of intracellular compartments and in some cell types, is targeted to the plasma membrane, where it is responsible for acidifying the extracellular environment. During embryonic development, the V-ATPase is required to repress fusion of epidermal cells probably by negatively regulating eff-1-mediated cell fusion. This chain is V-type proton ATPase subunit e, found in Caenorhabditis elegans.